A 260-amino-acid chain; its full sequence is Type III pantothenate kinase (260 aa).

6-13 (DAGNTNIV) contacts ATP. 108–111 (GADR) lines the substrate pocket. Catalysis depends on aspartate 110, which acts as the Proton acceptor. Residue aspartate 130 coordinates K(+). Threonine 133 is a binding site for ATP. Substrate is bound at residue threonine 187.

It belongs to the type III pantothenate kinase family. As to quaternary structure, homodimer. NH4(+) serves as cofactor. K(+) is required as a cofactor.

The protein localises to the cytoplasm. It catalyses the reaction (R)-pantothenate + ATP = (R)-4'-phosphopantothenate + ADP + H(+). The protein operates within cofactor biosynthesis; coenzyme A biosynthesis; CoA from (R)-pantothenate: step 1/5. Functionally, catalyzes the phosphorylation of pantothenate (Pan), the first step in CoA biosynthesis. The protein is Type III pantothenate kinase of Rhizorhabdus wittichii (strain DSM 6014 / CCUG 31198 / JCM 15750 / NBRC 105917 / EY 4224 / RW1) (Sphingomonas wittichii).